Here is a 602-residue protein sequence, read N- to C-terminus: Potassium-transporting ATPase potassium-binding subunit (602 aa).

10 consecutive transmembrane segments (helical) span residues 3 to 23 (ANNL…AVPV), 64 to 84 (QYAL…YALL), 135 to 155 (GLTV…LALI), 178 to 198 (LYVL…QGVI), 282 to 302 (FSNF…CLVF), 313 to 333 (VAVL…ETSA), 418 to 438 (GLYG…LMIG), 456 to 476 (VSIV…IAVL), 522 to 542 (WMTA…VLAI), and 565 to 585 (LFVV…YMPA).

This sequence belongs to the KdpA family. In terms of assembly, the system is composed of three essential subunits: KdpA, KdpB and KdpC.

It is found in the cell inner membrane. Functionally, part of the high-affinity ATP-driven potassium transport (or Kdp) system, which catalyzes the hydrolysis of ATP coupled with the electrogenic transport of potassium into the cytoplasm. This subunit binds the periplasmic potassium ions and delivers the ions to the membrane domain of KdpB through an intramembrane tunnel. This is Potassium-transporting ATPase potassium-binding subunit from Burkholderia pseudomallei (strain K96243).